A 594-amino-acid chain; its full sequence is Zinc finger protein 37 (594 aa).

The interval 1 to 253 (MATSEPAESD…KPEKAPGSGK (253 aa)) is disordered. T3 bears the Phosphothreonine mark. One can recognise a KRAB domain in the interval 3–74 (TSEPAESDAV…GKKASPSSLK (72 aa)). S9 carries the phosphoserine modification. Basic and acidic residues predominate over residues 10-33 (DAVRAKEWEQLEPVQRDVYKDTKL). Polar residues predominate over residues 34 to 46 (ENCSNPASMGNQD). The segment covering 89–111 (QQDDEHREEKQKSQSKLTKEVTL) has biased composition (basic and acidic residues). A compositionally biased stretch (polar residues) spans 145 to 158 (KSSSRGKNSNQNSD). 2 stretches are compositionally biased toward basic and acidic residues: residues 159-172 (SLKK…DHRK) and 181-234 (VNKD…TGEK). 12 consecutive C2H2-type zinc fingers follow at residues 255–277 (YECN…QRTH), 283–305 (YECN…QRTH), 311–324 (YECE…GHKH), 339–361 (YKCN…LRSH), 367–389 (YECK…VRTH), 395–417 (YECN…MRIH), 423–445 (FECN…QRTH), 451–473 (YKCD…MRTH), 479–501 (FECN…QRVH), 507–529 (YECV…QRTH), 535–557 (FECY…QRSH), and 563–585 (YECI…MKIH).

Belongs to the krueppel C2H2-type zinc-finger protein family. In terms of tissue distribution, expressed in testis and brain.

The protein localises to the nucleus. In terms of biological role, may have a role in regulating spermiogenesis. The protein is Zinc finger protein 37 (Zfp37) of Mus musculus (Mouse).